Reading from the N-terminus, the 543-residue chain is Chaperonin GroEL (543 aa).

ATP-binding positions include 29–32, 86–90, G413, 478–480, and D494; these read TLGP, DGTTT, and DAL. The disordered stretch occupies residues 524–543; that stretch reads PEPEAPAVPAGMPGGMGGMY.

Belongs to the chaperonin (HSP60) family. In terms of assembly, forms a cylinder of 14 subunits composed of two heptameric rings stacked back-to-back. Interacts with the co-chaperonin GroES.

Its subcellular location is the cytoplasm. The enzyme catalyses ATP + H2O + a folded polypeptide = ADP + phosphate + an unfolded polypeptide.. Functionally, together with its co-chaperonin GroES, plays an essential role in assisting protein folding. The GroEL-GroES system forms a nano-cage that allows encapsulation of the non-native substrate proteins and provides a physical environment optimized to promote and accelerate protein folding. The polypeptide is Chaperonin GroEL (Ruminiclostridium cellulolyticum (strain ATCC 35319 / DSM 5812 / JCM 6584 / H10) (Clostridium cellulolyticum)).